A 525-amino-acid chain; its full sequence is Phosphoenolpyruvate carboxykinase (ATP) (525 aa).

Residues Arg-52, Tyr-186, and Lys-192 each contribute to the substrate site. ATP contacts are provided by residues Lys-192, His-211, and Gly-228–Thr-236. Positions 192 and 211 each coordinate Mn(2+). Asp-249 provides a ligand contact to Mn(2+). ATP contacts are provided by residues Glu-277, Arg-314, Arg-433–Ile-434, and Thr-439. Arg-314 is a binding site for substrate.

The protein belongs to the phosphoenolpyruvate carboxykinase (ATP) family. Requires Mn(2+) as cofactor.

It is found in the cytoplasm. It carries out the reaction oxaloacetate + ATP = phosphoenolpyruvate + ADP + CO2. The protein operates within carbohydrate biosynthesis; gluconeogenesis. Functionally, involved in the gluconeogenesis. Catalyzes the conversion of oxaloacetate (OAA) to phosphoenolpyruvate (PEP) through direct phosphoryl transfer between the nucleoside triphosphate and OAA. This Fusobacterium nucleatum subsp. nucleatum (strain ATCC 25586 / DSM 15643 / BCRC 10681 / CIP 101130 / JCM 8532 / KCTC 2640 / LMG 13131 / VPI 4355) protein is Phosphoenolpyruvate carboxykinase (ATP).